The following is a 190-amino-acid chain: Peptidyl-tRNA hydrolase (190 aa).

Tyrosine 14 is a binding site for tRNA. Histidine 19 (proton acceptor) is an active-site residue. TRNA is bound by residues tyrosine 64, asparagine 66, and asparagine 112.

It belongs to the PTH family. In terms of assembly, monomer.

Its subcellular location is the cytoplasm. The catalysed reaction is an N-acyl-L-alpha-aminoacyl-tRNA + H2O = an N-acyl-L-amino acid + a tRNA + H(+). Functionally, hydrolyzes ribosome-free peptidyl-tRNAs (with 1 or more amino acids incorporated), which drop off the ribosome during protein synthesis, or as a result of ribosome stalling. Its function is as follows. Catalyzes the release of premature peptidyl moieties from peptidyl-tRNA molecules trapped in stalled 50S ribosomal subunits, and thus maintains levels of free tRNAs and 50S ribosomes. The polypeptide is Peptidyl-tRNA hydrolase (Chlorobium chlorochromatii (strain CaD3)).